The primary structure comprises 254 residues: Phosphoribosylaminoimidazole-succinocarboxamide synthase (254 aa).

The protein belongs to the SAICAR synthetase family.

It catalyses the reaction 5-amino-1-(5-phospho-D-ribosyl)imidazole-4-carboxylate + L-aspartate + ATP = (2S)-2-[5-amino-1-(5-phospho-beta-D-ribosyl)imidazole-4-carboxamido]succinate + ADP + phosphate + 2 H(+). It functions in the pathway purine metabolism; IMP biosynthesis via de novo pathway; 5-amino-1-(5-phospho-D-ribosyl)imidazole-4-carboxamide from 5-amino-1-(5-phospho-D-ribosyl)imidazole-4-carboxylate: step 1/2. This Brucella melitensis biotype 2 (strain ATCC 23457) protein is Phosphoribosylaminoimidazole-succinocarboxamide synthase.